The sequence spans 286 residues: Elongation factor Ts (286 aa).

The interval 79 to 82 is involved in Mg(2+) ion dislocation from EF-Tu; that stretch reads TDFV.

This sequence belongs to the EF-Ts family.

It is found in the cytoplasm. In terms of biological role, associates with the EF-Tu.GDP complex and induces the exchange of GDP to GTP. It remains bound to the aminoacyl-tRNA.EF-Tu.GTP complex up to the GTP hydrolysis stage on the ribosome. The sequence is that of Elongation factor Ts from Wolbachia pipientis wMel.